The primary structure comprises 146 residues: ATP synthase epsilon chain (146 aa).

Positions 103 to 122 (SAKKRAEQHMQEAKEKHNER) are disordered.

Belongs to the ATPase epsilon chain family. As to quaternary structure, F-type ATPases have 2 components, CF(1) - the catalytic core - and CF(0) - the membrane proton channel. CF(1) has five subunits: alpha(3), beta(3), gamma(1), delta(1), epsilon(1). CF(0) has three main subunits: a, b and c.

Its subcellular location is the cell membrane. Produces ATP from ADP in the presence of a proton gradient across the membrane. This chain is ATP synthase epsilon chain, found in Lactobacillus johnsonii (strain CNCM I-12250 / La1 / NCC 533).